Reading from the N-terminus, the 180-residue chain is Large ribosomal subunit protein uL5 (180 aa).

Belongs to the universal ribosomal protein uL5 family. In terms of assembly, part of the 50S ribosomal subunit; part of the 5S rRNA/L5/L18/L25 subcomplex. Contacts the 5S rRNA and the P site tRNA. Forms a bridge to the 30S subunit in the 70S ribosome.

This is one of the proteins that bind and probably mediate the attachment of the 5S RNA into the large ribosomal subunit, where it forms part of the central protuberance. In the 70S ribosome it contacts protein S13 of the 30S subunit (bridge B1b), connecting the 2 subunits; this bridge is implicated in subunit movement. Contacts the P site tRNA; the 5S rRNA and some of its associated proteins might help stabilize positioning of ribosome-bound tRNAs. The polypeptide is Large ribosomal subunit protein uL5 (Gloeothece citriformis (strain PCC 7424) (Cyanothece sp. (strain PCC 7424))).